A 215-amino-acid chain; its full sequence is Thymidylate kinase (215 aa).

11–18 (GIDGAGKS) is an ATP binding site.

It belongs to the thymidylate kinase family.

It catalyses the reaction dTMP + ATP = dTDP + ADP. Its function is as follows. Phosphorylation of dTMP to form dTDP in both de novo and salvage pathways of dTTP synthesis. The protein is Thymidylate kinase of Nitrosomonas eutropha (strain DSM 101675 / C91 / Nm57).